The primary structure comprises 358 residues: Peptide chain release factor 1 (358 aa).

Glutamine 233 is subject to N5-methylglutamine.

Belongs to the prokaryotic/mitochondrial release factor family. Post-translationally, methylated by PrmC. Methylation increases the termination efficiency of RF1.

The protein localises to the cytoplasm. Peptide chain release factor 1 directs the termination of translation in response to the peptide chain termination codons UAG and UAA. The sequence is that of Peptide chain release factor 1 from Listeria innocua serovar 6a (strain ATCC BAA-680 / CLIP 11262).